A 288-amino-acid chain; its full sequence is 33 kDa chaperonin (288 aa).

2 disulfides stabilise this stretch: Cys236–Cys238 and Cys269–Cys272.

Belongs to the HSP33 family. Post-translationally, under oxidizing conditions two disulfide bonds are formed involving the reactive cysteines. Under reducing conditions zinc is bound to the reactive cysteines and the protein is inactive.

Its subcellular location is the cytoplasm. Its function is as follows. Redox regulated molecular chaperone. Protects both thermally unfolding and oxidatively damaged proteins from irreversible aggregation. Plays an important role in the bacterial defense system toward oxidative stress. This is 33 kDa chaperonin from Lactococcus lactis subsp. cremoris (strain MG1363).